The sequence spans 347 residues: MSLGPVMLDLEGTALTETERRLLTHPRAGGVILFTRNFESLGQLTELLREIHALRTPRLLVAVDHEGGRVQRFREGFTRLPAAARFGEQYDRNHARGRELARMAGWLMAAELRAVGVDFSFAPVLDLAHGVSGVIGDRAFHRNPEVVADLAHHYMSGMQHAGMAAVGKHFPGHGGVREDSHLALPVDRRTPADLYTDILPFERMVRFGLAGIMPAHVVYERCDPLPAGFSSYWLRGELRDRLGFEGVIFSDDLSMAGAECMGDYPDRARAALKAGCDMVLVCNHPEQAARVLDALDDEPDPVSIARLARMHGRKGMTWGELTDSDEWQKARAVINALDDSPLMELDV.

Residues aspartate 64, arginine 72, arginine 138, and 168–169 (KH) each bind substrate. Histidine 181 (proton donor/acceptor) is an active-site residue. Residue aspartate 251 is the Nucleophile of the active site.

Belongs to the glycosyl hydrolase 3 family. NagZ subfamily.

It localises to the cytoplasm. It catalyses the reaction Hydrolysis of terminal non-reducing N-acetyl-D-hexosamine residues in N-acetyl-beta-D-hexosaminides.. Its pathway is cell wall biogenesis; peptidoglycan recycling. Plays a role in peptidoglycan recycling by cleaving the terminal beta-1,4-linked N-acetylglucosamine (GlcNAc) from peptide-linked peptidoglycan fragments, giving rise to free GlcNAc, anhydro-N-acetylmuramic acid and anhydro-N-acetylmuramic acid-linked peptides. This chain is Beta-hexosaminidase, found in Thioalkalivibrio sulfidiphilus (strain HL-EbGR7).